The following is a 365-amino-acid chain: MFDMYIESGGKKLRCGYTTGSCAAAAAKAATYMLFNKKDISVIEIDTPKNIKLNLEIQDIQVEKNSISCSIVKDGGDDIDATSGLEIFAKAEEIEEGFELCGGEGVGVVTKEGLFVEKGQPAINPVPREMIKKEVLSVLPKDKGVRITIFVPRGREIAKKTFNPRLGIVNGISILGTTGIVYPMSEEALKESIRIEIRQKSVNNKDLVFVFGNMGERFLRERGYKKDNIVVISNYVGFSIECALAQGIKDLTIVGHIGKLSKIAFGCFNTHSRVSDVRLEVIALELTLMGYDLELVQKVLDQKTSEGAVRLLGDDFPMLYERIGEKVLKRLDIYAYGEANFNILMYYGSKEMKLLYESKNSNLFD.

Belongs to the CbiD family.

The enzyme catalyses Co-precorrin-5B + S-adenosyl-L-methionine = Co-precorrin-6A + S-adenosyl-L-homocysteine. Its pathway is cofactor biosynthesis; adenosylcobalamin biosynthesis; cob(II)yrinate a,c-diamide from sirohydrochlorin (anaerobic route): step 6/10. Its function is as follows. Catalyzes the methylation of C-1 in cobalt-precorrin-5B to form cobalt-precorrin-6A. The polypeptide is Cobalt-precorrin-5B C(1)-methyltransferase (Clostridium perfringens (strain SM101 / Type A)).